The sequence spans 452 residues: Probable phosphoglucosamine mutase (452 aa).

Ser96 functions as the Phosphoserine intermediate in the catalytic mechanism. 4 residues coordinate Mg(2+): Ser96, Asp233, Asp235, and Asp237. At Ser96 the chain carries Phosphoserine.

The protein belongs to the phosphohexose mutase family. It depends on Mg(2+) as a cofactor. Activated by phosphorylation.

It catalyses the reaction alpha-D-glucosamine 1-phosphate = D-glucosamine 6-phosphate. Functionally, catalyzes the conversion of glucosamine-6-phosphate to glucosamine-1-phosphate. The chain is Probable phosphoglucosamine mutase from Pyrococcus furiosus (strain ATCC 43587 / DSM 3638 / JCM 8422 / Vc1).